A 504-amino-acid polypeptide reads, in one-letter code: Xylose import ATP-binding protein XylG (504 aa).

ABC transporter domains lie at 5–242 (LEMK…VGRE) and 259–500 (LRVE…VMEA). 37–44 (GENGSGKS) lines the ATP pocket.

The protein belongs to the ABC transporter superfamily. Xylose importer (TC 3.A.1.2.4) family. In terms of assembly, the complex is composed of two ATP-binding proteins (XylG), two transmembrane proteins (XylH) and a solute-binding protein (XylF).

It localises to the cell inner membrane. It catalyses the reaction D-xylose(out) + ATP + H2O = D-xylose(in) + ADP + phosphate + H(+). Its function is as follows. Part of the ABC transporter complex XylFGH involved in xylose import. Responsible for energy coupling to the transport system. This is Xylose import ATP-binding protein XylG from Histophilus somni (strain 129Pt) (Haemophilus somnus).